A 542-amino-acid chain; its full sequence is MANNSPALTGNSQPQHQAAAAVTQQQQQCGGGGGATKPAVSGKQGNVLPLWGNEKTMNLNPMILTNILSSPYFKVQLYELKTYHEVVDEIYFKVTHVEPWEKGSRKTAGQTGMCGGVRGVGTGGIVSTAFCLLYKLFTLKLTRKQVMGLITHTDSPYIRALGFMYIRYTQPPTDLWDWFESFLDDEEDLDVKAGGGCVMTIGEMLRSFLTKLEWFSTLFPRIPVPVQKNIDQQIKTRPRKIKKDGKEGIEEIDRHVERRRSRSPRRSLSPRRSPRRSRSRSHHREGHGSSSFDRELEREKERQRLEREAKEREKERRRSRSIDRGLDRRRSRSRERHRSRSRSRDRKGDRRDRDREREKENERGRRRDRDYDKERGSDRERDRERSRERSKEQRSRGDGEEKKHKEDKEDRRHRDDKKESKKKHSRSRSRERKHRSRSRNAGKRSRSRSKDKSSRHKNESKEKANKRSRSGSQGRTGSVEKRKREHSPSREKSRKRSRSQDRSHKREHNDSKDQSDRQDHQSSQSGEPESQEKEHKSKDETV.

A compositionally biased stretch (polar residues) spans 1-12; it reads MANNSPALTGNS. The tract at residues 1–41 is disordered; the sequence is MANNSPALTGNSQPQHQAAAAVTQQQQQCGGGGGATKPAVS. An N-acetylalanine modification is found at A2. The residue at position 5 (S5) is a Phosphoserine. A compositionally biased stretch (low complexity) spans 13 to 28; it reads QPQHQAAAAVTQQQQQ. K228 carries the N6-acetyllysine modification. A disordered region spans residues 233–542; sequence QIKTRPRKIK…KEHKSKDETV (310 aa). Basic and acidic residues predominate over residues 244-256; sequence DGKEGIEEIDRHV. Basic residues predominate over residues 257-285; the sequence is ERRRSRSPRRSLSPRRSPRRSRSRSHHRE. Phosphoserine occurs at positions 289, 291, 319, and 321. Over residues 292–328 the composition is skewed to basic and acidic residues; the sequence is FDRELEREKERQRLEREAKEREKERRRSRSIDRGLDR. A coiled-coil region spans residues 293–322; the sequence is DRELEREKERQRLEREAKEREKERRRSRSI. Basic residues predominate over residues 329–345; that stretch reads RRSRSRERHRSRSRSRD. Residues 346-419 show a composition bias toward basic and acidic residues; the sequence is RKGDRRDRDR…DRRHRDDKKE (74 aa). Over residues 420–447 the composition is skewed to basic residues; that stretch reads SKKKHSRSRSRERKHRSRSRNAGKRSRS. S445 carries the post-translational modification Phosphoserine. Residues 448–465 are compositionally biased toward basic and acidic residues; the sequence is RSKDKSSRHKNESKEKAN. Phosphoserine is present on residues S470, S472, and S478. Basic and acidic residues-rich tracts occupy residues 478–491 and 498–520; these read SVEKRKREHSPSRE and RSQDRSHKREHNDSKDQSDRQDH. Phosphoserine occurs at positions 523, 525, and 530. Residues 530 to 542 are compositionally biased toward basic and acidic residues; the sequence is SQEKEHKSKDETV.

Belongs to the PRP38 family.

The protein resides in the nucleus. Functionally, may be required for pre-mRNA splicing. The chain is Pre-mRNA-splicing factor 38B (Prpf38b) from Mus musculus (Mouse).